The following is a 689-amino-acid chain: DNA ligase (689 aa).

NAD(+) contacts are provided by residues 51 to 55, 100 to 101, and E129; these read DSEYD and SL. The active-site N6-AMP-lysine intermediate is K131. NAD(+)-binding residues include R152, E189, K308, and K332. Residues C426, C429, C444, and C450 each contribute to the Zn(2+) site. In terms of domain architecture, BRCT spans 609-689; sequence ADEQPLKGQT…ELLALLAANS (81 aa).

Belongs to the NAD-dependent DNA ligase family. LigA subfamily. Requires Mg(2+) as cofactor. Mn(2+) is required as a cofactor.

The catalysed reaction is NAD(+) + (deoxyribonucleotide)n-3'-hydroxyl + 5'-phospho-(deoxyribonucleotide)m = (deoxyribonucleotide)n+m + AMP + beta-nicotinamide D-nucleotide.. Functionally, DNA ligase that catalyzes the formation of phosphodiester linkages between 5'-phosphoryl and 3'-hydroxyl groups in double-stranded DNA using NAD as a coenzyme and as the energy source for the reaction. It is essential for DNA replication and repair of damaged DNA. In Shewanella sp. (strain ANA-3), this protein is DNA ligase.